Reading from the N-terminus, the 93-residue chain is HIG1 domain family member 1A, mitochondrial (93 aa).

At serine 2 the chain carries N-acetylserine. The HIG1 domain occupies 2-93; it reads STNTDLSLSS…YQEFWAKRKP (92 aa). Phosphoserine is present on serine 8. A run of 2 helical transmembrane segments spans residues 28–48 and 69–89; these read PFVP…LYKL and GFVV…EFWA. At 90–93 the chain is on the mitochondrial matrix side; the sequence is KRKP.

In terms of assembly, associates with cytochrome c oxidase (COX, complex IV); proposed complex component. Also associates with respiratory chain supercomplexes. As to expression, expressed in brain and spinal cord.

The protein resides in the mitochondrion membrane. Its subcellular location is the mitochondrion inner membrane. Proposed subunit of cytochrome c oxidase (COX, complex IV), which is the terminal component of the mitochondrial respiratory chain that catalyzes the reduction of oxygen to water. May play a role in the assembly of respiratory supercomplexes. This is HIG1 domain family member 1A, mitochondrial (Higd1a) from Rattus norvegicus (Rat).